Here is a 146-residue protein sequence, read N- to C-terminus: Snaclec echicetin subunit beta (146 aa).

A signal peptide spans 1–23; that stretch reads MGRFISVSFGLLVLLLSLSGTGA. Cystine bridges form between C25-C36, C53-C142, and C119-C134. The 112-residue stretch at 32-143 folds into the C-type lectin domain; the sequence is YEGYCYKVFK…CTWTFSFVCK (112 aa).

It belongs to the snaclec family. As to quaternary structure, heterodimer of subunits alpha and beta; disulfide-linked. As to expression, expressed by the venom gland.

The protein resides in the secreted. Binding of echicetin to glycoprotein Ibalpha (GP1BA) receptor on platelets alone results in inhibition of platelet aggregation, while binding to both GPIba receptor and IgMk promotes platelet aggregation and signal transduction. In Echis carinatus (Saw-scaled viper), this protein is Snaclec echicetin subunit beta.